The sequence spans 230 residues: Orotidine 5'-phosphate decarboxylase (230 aa).

Residues D10, K32, 59–68 (DLKFHDIPRT), T116, R177, Q186, G206, and R207 contribute to the substrate site. The active-site Proton donor is K61.

It belongs to the OMP decarboxylase family. Type 1 subfamily. As to quaternary structure, homodimer.

It catalyses the reaction orotidine 5'-phosphate + H(+) = UMP + CO2. Its pathway is pyrimidine metabolism; UMP biosynthesis via de novo pathway; UMP from orotate: step 2/2. In terms of biological role, catalyzes the decarboxylation of orotidine 5'-monophosphate (OMP) to uridine 5'-monophosphate (UMP). The polypeptide is Orotidine 5'-phosphate decarboxylase (Methylacidiphilum infernorum (isolate V4) (Methylokorus infernorum (strain V4))).